A 343-amino-acid chain; its full sequence is Aspartate carbamoyltransferase catalytic subunit (343 aa).

Residues R91 and T92 each contribute to the carbamoyl phosphate site. Position 119 (K119) interacts with L-aspartate. Carbamoyl phosphate is bound by residues R141, H171, and Q174. Positions 204 and 259 each coordinate L-aspartate. Residues G300 and P301 each coordinate carbamoyl phosphate.

It belongs to the aspartate/ornithine carbamoyltransferase superfamily. ATCase family. Heterododecamer (2C3:3R2) of six catalytic PyrB chains organized as two trimers (C3), and six regulatory PyrI chains organized as three dimers (R2).

It carries out the reaction carbamoyl phosphate + L-aspartate = N-carbamoyl-L-aspartate + phosphate + H(+). It functions in the pathway pyrimidine metabolism; UMP biosynthesis via de novo pathway; (S)-dihydroorotate from bicarbonate: step 2/3. Its function is as follows. Catalyzes the condensation of carbamoyl phosphate and aspartate to form carbamoyl aspartate and inorganic phosphate, the committed step in the de novo pyrimidine nucleotide biosynthesis pathway. The chain is Aspartate carbamoyltransferase catalytic subunit from Burkholderia mallei (strain NCTC 10247).